We begin with the raw amino-acid sequence, 274 residues long: uncharacterized protein (274 aa).

104 to 111 (GVFAIGKS) is a binding site for ATP.

This is an uncharacterized protein from Mycoplasma genitalium (strain ATCC 33530 / DSM 19775 / NCTC 10195 / G37) (Mycoplasmoides genitalium).